A 1391-amino-acid polypeptide reads, in one-letter code: DNA-directed RNA polymerase subunit beta (1391 aa).

The protein belongs to the RNA polymerase beta chain family. The RNAP catalytic core consists of 2 alpha, 1 beta, 1 beta' and 1 omega subunit. When a sigma factor is associated with the core the holoenzyme is formed, which can initiate transcription.

It catalyses the reaction RNA(n) + a ribonucleoside 5'-triphosphate = RNA(n+1) + diphosphate. In terms of biological role, DNA-dependent RNA polymerase catalyzes the transcription of DNA into RNA using the four ribonucleoside triphosphates as substrates. The sequence is that of DNA-directed RNA polymerase subunit beta from Granulibacter bethesdensis (strain ATCC BAA-1260 / CGDNIH1).